A 192-amino-acid polypeptide reads, in one-letter code: MGNILLLDNIDSFTYNLVDQLRSNFHQVFVYRNTVRKNIILKKLSKMINPILILSPGPGNPDNAGCMPQLLMELKGKLPIIGICLGHQAIVKMYGGHVGYSGEILHGQASLINHDNKAMFLGMSNPLPVARYHSLICSNIPNMLVVNAHFNNMVMAVRNDYEKICGFQFHPESILTTRGTEFLQRVIQWTKI.

The Glutamine amidotransferase type-1 domain maps to 3–192; it reads NILLLDNIDS…LQRVIQWTKI (190 aa). 57 to 59 provides a ligand contact to L-glutamine; it reads GPG. The active-site Nucleophile; for GATase activity is C84. Residues Q88 and 134-135 contribute to the L-glutamine site; that span reads SL. Residues H170 and E172 each act as for GATase activity in the active site.

As to quaternary structure, heterotetramer consisting of two non-identical subunits: a beta subunit (TrpG) and a large alpha subunit (TrpE).

It catalyses the reaction chorismate + L-glutamine = anthranilate + pyruvate + L-glutamate + H(+). It participates in amino-acid biosynthesis; L-tryptophan biosynthesis; L-tryptophan from chorismate: step 1/5. Part of a heterotetrameric complex that catalyzes the two-step biosynthesis of anthranilate, an intermediate in the biosynthesis of L-tryptophan. In the first step, the glutamine-binding beta subunit (TrpG) of anthranilate synthase (AS) provides the glutamine amidotransferase activity which generates ammonia as a substrate that, along with chorismate, is used in the second step, catalyzed by the large alpha subunit of AS (TrpE) to produce anthranilate. In the absence of TrpG, TrpE can synthesize anthranilate directly from chorismate and high concentrations of ammonia. This Buchnera aphidicola subsp. Baizongia pistaciae (strain Bp) protein is Anthranilate synthase component 2 (trpG).